The following is a 182-amino-acid chain: Large ribosomal subunit protein uL6 (182 aa).

Belongs to the universal ribosomal protein uL6 family. In terms of assembly, part of the 50S ribosomal subunit.

Functionally, this protein binds to the 23S rRNA, and is important in its secondary structure. It is located near the subunit interface in the base of the L7/L12 stalk, and near the tRNA binding site of the peptidyltransferase center. This is Large ribosomal subunit protein uL6 from Haloquadratum walsbyi (strain DSM 16790 / HBSQ001).